Reading from the N-terminus, the 427-residue chain is MNKLENTIDSDIAGPAPRHRTTQVKVGDVAVGGGAPIVVQSMTNTDTADIDGTIAQVAALARAGSEMVRITVDREEAAAAVPHIRDGLAKRGITTPLIGDFHYIGHKLLAAYPACAEALAKYRINPGNVGFKDKRDTQFADIIEIANKNSKPVRIGANWGSLDQELLTKLMDENAASANPRDVRAVTREAMVQSALLSAARAEELGMPKDRIILSAKVSAVQDLIAVYQDLASRSDYAIHLGLTEAGMGSKGIVASSAALGILLQQGIGDTIRISLTPEPGGDRTREVQVGQELLQTMGFRTFVPLVAACPGCGRTTSTTFQELARSIQDFIRDEMPAWKTKYPGVEELNVAVMGCIVNGPGESKHANIGISLPGTGEAPAAPVFVDGKKFRTLRGPTISDDFKALVIDYIDQRYGQGAKVPVTAAE.

Residues 1-21 (MNKLENTIDSDIAGPAPRHRT) are disordered. [4Fe-4S] cluster contacts are provided by cysteine 310, cysteine 313, cysteine 356, and glutamate 363.

It belongs to the IspG family. Requires [4Fe-4S] cluster as cofactor.

It catalyses the reaction (2E)-4-hydroxy-3-methylbut-2-enyl diphosphate + oxidized [flavodoxin] + H2O + 2 H(+) = 2-C-methyl-D-erythritol 2,4-cyclic diphosphate + reduced [flavodoxin]. It functions in the pathway isoprenoid biosynthesis; isopentenyl diphosphate biosynthesis via DXP pathway; isopentenyl diphosphate from 1-deoxy-D-xylulose 5-phosphate: step 5/6. Functionally, converts 2C-methyl-D-erythritol 2,4-cyclodiphosphate (ME-2,4cPP) into 1-hydroxy-2-methyl-2-(E)-butenyl 4-diphosphate. The sequence is that of 4-hydroxy-3-methylbut-2-en-1-yl diphosphate synthase (flavodoxin) from Bradyrhizobium diazoefficiens (strain JCM 10833 / BCRC 13528 / IAM 13628 / NBRC 14792 / USDA 110).